The primary structure comprises 189 residues: Interferon alpha-1 (189 aa).

Positions 1–23 (MAPTSAFLTALVLLSCNAICSLG) are cleaved as a signal peptide. 2 cysteine pairs are disulfide-bonded: cysteine 24/cysteine 122 and cysteine 52/cysteine 162.

It belongs to the alpha/beta interferon family. In terms of assembly, interacts with CR2.

The protein resides in the secreted. Produced by macrophages, IFN-alpha have antiviral activities. Interferon stimulates the production of two enzymes: a protein kinase and an oligoadenylate synthetase. This Sus scrofa (Pig) protein is Interferon alpha-1.